A 300-amino-acid chain; its full sequence is Small ribosomal subunit protein uS4m (300 aa).

Residues 146–209 (KRVDMVLLRS…MKRKLLKRLK (64 aa)) form the S4 RNA-binding domain.

Belongs to the universal ribosomal protein uS4 family.

The protein resides in the mitochondrion. In Dictyostelium discoideum (Social amoeba), this protein is Small ribosomal subunit protein uS4m (mrps4).